Reading from the N-terminus, the 541-residue chain is Tyrosine-protein kinase Yes (541 aa).

Basic and acidic residues predominate over residues 1–10 (MGCIKSKENK). The disordered stretch occupies residues 1–29 (MGCIKSKENKSPAIKYTPENPTEPVNTSA). Gly-2 carries the N-myristoyl glycine lipid modification. Residue Cys-3 is the site of S-palmitoyl cysteine; in membrane form attachment. Polar residues predominate over residues 19–29 (ENPTEPVNTSA). Tyr-32 is modified (phosphotyrosine). The region spanning 89-150 (GGVTIFVALY…PSNYVAPADS (62 aa)) is the SH3 domain. Residues 156-253 (WYFGKMGRKD…GLCHKLTTVC (98 aa)) form the SH2 domain. The 254-residue stretch at 275–528 (LRLEVKLGQG…YIQSFLEDYF (254 aa)) folds into the Protein kinase domain. Residues 281-289 (LGQGCFGEV) and Lys-303 contribute to the ATP site. 2 positions are modified to phosphotyrosine: Tyr-334 and Tyr-343. Asp-394 acts as the Proton acceptor in catalysis. The residue at position 424 (Tyr-424) is a Phosphotyrosine; by autocatalysis. The residue at position 535 (Tyr-535) is a Phosphotyrosine.

Interacts with YAP1 and CSF1R. Interacts with FASLG. Interacts with CTNND1; this interaction allows YES1-mediated activation of FYN and FER and subsequent phosphorylation of CTNND1. Interacts with IL6ST/gp130. Interacts with SCRIB, when YES1 is in a closed conformation; the interaction facilitates YES1 autophosphorylation. Phosphorylated. Phosphorylation by CSK on the C-terminal tail maintains the enzyme in an inactive state. Autophosphorylation at Tyr-424 maintains enzyme activity by blocking CSK-mediated inhibition. In terms of processing, palmitoylation at Cys-3 promotes membrane localization.

Its subcellular location is the cell membrane. It is found in the cytoplasm. The protein resides in the cytoskeleton. It localises to the microtubule organizing center. The protein localises to the centrosome. Its subcellular location is the cytosol. It is found in the cell junction. The enzyme catalyses L-tyrosyl-[protein] + ATP = O-phospho-L-tyrosyl-[protein] + ADP + H(+). Its function is as follows. Non-receptor protein tyrosine kinase that is involved in the regulation of cell growth and survival, apoptosis, cell-cell adhesion, cytoskeleton remodeling, and differentiation. Stimulation by receptor tyrosine kinases (RTKs) including EGFR, PDGFR, CSF1R and FGFR leads to recruitment of YES1 to the phosphorylated receptor, and activation and phosphorylation of downstream substrates. Upon EGFR activation, promotes the phosphorylation of PARD3 to favor epithelial tight junction assembly. Participates in the phosphorylation of specific junctional components such as CTNND1 by stimulating the FYN and FER tyrosine kinases at cell-cell contacts. Upon T-cell stimulation by CXCL12, phosphorylates collapsin response mediator protein 2/DPYSL2 and induces T-cell migration. Participates in CD95L/FASLG signaling pathway and mediates AKT-mediated cell migration. Plays a role in cell cycle progression by phosphorylating the cyclin dependent kinase 4/CDK4 thus regulating the G1 phase. Also involved in G2/M progression and cytokinesis. Catalyzes phosphorylation of organic cation transporter OCT2 which induces its transport activity. In Rattus norvegicus (Rat), this protein is Tyrosine-protein kinase Yes (Yes1).